Here is a 396-residue protein sequence, read N- to C-terminus: Immunoglobulin heavy constant gamma 4 (396 aa).

The segment at 1-98 is CH1; the sequence is ASTKGPSVFP…PSNTKVDKRV (98 aa). Residues 1 to 347 lie on the Extracellular side of the membrane; the sequence is ASTKGPSVFP…DGELDGLWTT (347 aa). Ig-like domains follow at residues 6 to 99, 118 to 217, and 226 to 322; these read PSVF…KRVE, PSVF…KTIS, and PQVY…KSLS. Cys-27 and Cys-83 are joined by a disulfide. Residues 99–110 form a hinge region; it reads ESKYGPPCPSCP. Positions 111–220 are CH2; that stretch reads APEFLGGPSV…SIEKTISKAK (110 aa). 2 cysteine pairs are disulfide-bonded: Cys-141-Cys-201 and Cys-247-Cys-305. Residue Asn-177 is glycosylated (N-linked (GlcNAc...) (complex) asparagine). A CH3 region spans residues 221–327; that stretch reads GQPREPQVYT…QKSLSLSLEL (107 aa). Residues 348 to 368 traverse the membrane as a helical segment; that stretch reads ITIFITLFLLSVCYSATVTFF. At 369 to 396 the chain is on the cytoplasmic side; that stretch reads KVKWIFSSVVDLKQTIVPDYRNMIRQGA.

In terms of assembly, immunoglobulins are composed of two identical heavy chains and two identical light chains; disulfide-linked. In terms of processing, glycosylation on Asn-177 is required for interaction with Fc receptors and ability to activate the complement pathway. (Microbial infection) Deglycosylation on Asn-177 by S.pyogenes EndoS or Endos2 endoglucosidases prevents interaction between immunoglobulin-gamma (IgG) and Fc receptors, impairing ability to activate the complement pathway.

It is found in the secreted. It localises to the cell membrane. Constant region of immunoglobulin heavy chains. Immunoglobulins, also known as antibodies, are membrane-bound or secreted glycoproteins produced by B lymphocytes. In the recognition phase of humoral immunity, the membrane-bound immunoglobulins serve as receptors which, upon binding of a specific antigen, trigger the clonal expansion and differentiation of B lymphocytes into immunoglobulins-secreting plasma cells. Secreted immunoglobulins mediate the effector phase of humoral immunity, which results in the elimination of bound antigens. The antigen binding site is formed by the variable domain of one heavy chain, together with that of its associated light chain. Thus, each immunoglobulin has two antigen binding sites with remarkable affinity for a particular antigen. The variable domains are assembled by a process called V-(D)-J rearrangement and can then be subjected to somatic hypermutations which, after exposure to antigen and selection, allow affinity maturation for a particular antigen. This is Immunoglobulin heavy constant gamma 4 from Homo sapiens (Human).